Reading from the N-terminus, the 779-residue chain is Cell division control protein 4 (779 aa).

Residues 39–80 (AGTHRNSSTAKTVETEDGEEDIDEYQRKRAAGSGESTPERSD) form a disordered region. The Nuclear localization signal signature appears at 82-85 (KRVK). S104 is subject to Phosphoserine. In terms of domain architecture, F-box spans 272 to 319 (RDLITSLPFEISLKIFNYLQFEDIINSLGVSQNWNKIIRKSTSLWKKL). 7 WD repeats span residues 380–408 (HMTSVITCLQFEDNYVITGADDKMIRVYD), 420–449 (GHDGGVWALKYAHGGILVSGSTDRTVRVWD), 461–493 (GHNSTVRCLDIVEYKNIKYIVTGSRDNTLHVWK), 528–556 (GHMASVRTVSGHGNIVVSGSYDNTLIVWD), 568–598 (GHTDRIYSTIYDHERKRCISASMDTTIRIWD), 630–658 (GHTALVGLLRLSDKFLVSAAADGSIRGWD), and 669–698 (HHTNLSAITTFYVSDNILVSGSENQFNIYN).

Interacts with DCD53 and SKP1. Component of the SCF(CDC4) complex containing CDC53, SKP1, RBX1 and CDC4. CDC34. Interacts with CDC6 and CIC1. Interacts with SIC1; the interaction involves a SIC1 double phosphorylated motif (degron). Homodimerizes; the dimerization increases SIC1 ubiquitination in vitro.

It localises to the nucleus. It functions in the pathway protein modification; protein ubiquitination. Functionally, substrate recognition component of a SCF (SKP1-CUL1-F-box protein) E3 ubiquitin-protein ligase complex which mediates the ubiquitination and subsequent proteasomal degradation of target proteins. Recognizes and binds to phosphorylated target proteins. Directs ubiquitination of the phosphorylated CDK inhibitor SIC1. Involved in the degradation of CDC6 together with CDC34/UBC3 and CDC53, and in restricting the degradation of FAR1 to the nucleus. Is essential for initiation of DNA replication and separation of the spindle pole bodies to form the poles of the mitotic spindle. It also plays a role in bud development, fusion of zygotic nuclei after conjugation and various aspects of sporulation. Required for HTA1-HTB1 locus transcription activation. Required for G1/S and G2/M transition. This Saccharomyces cerevisiae (strain ATCC 204508 / S288c) (Baker's yeast) protein is Cell division control protein 4 (CDC4).